The chain runs to 282 residues: Probable endonuclease 4 (282 aa).

Residues H66, H106, E143, D177, H180, H214, D227, H229, and E259 each contribute to the Zn(2+) site.

The protein belongs to the AP endonuclease 2 family. It depends on Zn(2+) as a cofactor.

It carries out the reaction Endonucleolytic cleavage to 5'-phosphooligonucleotide end-products.. Its function is as follows. Endonuclease IV plays a role in DNA repair. It cleaves phosphodiester bonds at apurinic or apyrimidinic (AP) sites, generating a 3'-hydroxyl group and a 5'-terminal sugar phosphate. The protein is Probable endonuclease 4 of Nitratidesulfovibrio vulgaris (strain DP4) (Desulfovibrio vulgaris).